Reading from the N-terminus, the 166-residue chain is PTS system glucose-specific EIIA component (166 aa).

One can recognise a PTS EIIA type-1 domain in the interval 34 to 138; sequence DPVFAQKMMG…SVISPIIITN (105 aa). Zn(2+) is bound by residues His71 and His86. The active-site Tele-phosphohistidine intermediate; for EIIA activity is His86. Position 86 is a phosphohistidine; by HPr (His86).

As to quaternary structure, heterodimer with glycerol kinase (glpk). Requires Zn(2+) as cofactor.

The protein localises to the cytoplasm. The phosphoenolpyruvate-dependent sugar phosphotransferase system (sugar PTS), a major carbohydrate active transport system, catalyzes the phosphorylation of incoming sugar substrates concomitantly with their translocation across the cell membrane. The enzyme II complex composed of PtsG and Crr is involved in glucose transport. The chain is PTS system glucose-specific EIIA component (crr) from Staphylococcus aureus (strain MSSA476).